A 349-amino-acid chain; its full sequence is ATPase GET3 (349 aa).

ATP is bound at residue 27–34; the sequence is KGGVGKTT. Aspartate 58 is an active-site residue. Residues glutamate 240 and asparagine 267 each coordinate ATP. Positions 280 and 283 each coordinate Zn(2+).

It belongs to the arsA ATPase family. As to quaternary structure, homodimer. Component of the Golgi to ER traffic (GET) complex, which is composed of GET1, GET2 and GET3. Within the complex, GET1 and GET2 form a heterotetramer which is stabilized by phosphatidylinositol binding and which binds to the GET3 homodimer. Interacts with the chloride channel protein GEF1.

It is found in the cytoplasm. It localises to the endoplasmic reticulum. The protein localises to the golgi apparatus. In terms of biological role, ATPase required for the post-translational delivery of tail-anchored (TA) proteins to the endoplasmic reticulum. Recognizes and selectively binds the transmembrane domain of TA proteins in the cytosol. This complex then targets to the endoplasmic reticulum by membrane-bound receptors GET1 and GET2, where the tail-anchored protein is released for insertion. This process is regulated by ATP binding and hydrolysis. ATP binding drives the homodimer towards the closed dimer state, facilitating recognition of newly synthesized TA membrane proteins. ATP hydrolysis is required for insertion. Subsequently, the homodimer reverts towards the open dimer state, lowering its affinity for the GET1-GET2 receptor, and returning it to the cytosol to initiate a new round of targeting. Cooperates with the HDEL receptor ERD2 to mediate the ATP-dependent retrieval of resident ER proteins that contain a C-terminal H-D-E-L retention signal from the Golgi to the ER. Involved in low-level resistance to the oxyanions arsenite and arsenate, and in heat tolerance. This chain is ATPase GET3, found in Eremothecium gossypii (strain ATCC 10895 / CBS 109.51 / FGSC 9923 / NRRL Y-1056) (Yeast).